Reading from the N-terminus, the 483-residue chain is 3-isopropylmalate dehydratase large subunit (483 aa).

Residues Cys-352, Cys-412, and Cys-415 each coordinate [4Fe-4S] cluster.

It belongs to the aconitase/IPM isomerase family. LeuC type 1 subfamily. Heterodimer of LeuC and LeuD. [4Fe-4S] cluster serves as cofactor.

It carries out the reaction (2R,3S)-3-isopropylmalate = (2S)-2-isopropylmalate. It functions in the pathway amino-acid biosynthesis; L-leucine biosynthesis; L-leucine from 3-methyl-2-oxobutanoate: step 2/4. Functionally, catalyzes the isomerization between 2-isopropylmalate and 3-isopropylmalate, via the formation of 2-isopropylmaleate. This is 3-isopropylmalate dehydratase large subunit from Paenarthrobacter aurescens (strain TC1).